The primary structure comprises 475 residues: Adenosylhomocysteinase (475 aa).

Substrate is bound by residues T63, D138, and E199. T200–T202 contributes to the NAD(+) binding site. K229 and D233 together coordinate substrate. Residues N234, G263 to G268, E286, N321, I342 to H344, and N389 contribute to the NAD(+) site.

It belongs to the adenosylhomocysteinase family. NAD(+) serves as cofactor.

It is found in the cytoplasm. The enzyme catalyses S-adenosyl-L-homocysteine + H2O = L-homocysteine + adenosine. The protein operates within amino-acid biosynthesis; L-homocysteine biosynthesis; L-homocysteine from S-adenosyl-L-homocysteine: step 1/1. Functionally, may play a key role in the regulation of the intracellular concentration of adenosylhomocysteine. The sequence is that of Adenosylhomocysteinase from Solibacter usitatus (strain Ellin6076).